Reading from the N-terminus, the 336-residue chain is Phosphoribosylformylglycinamidine cyclo-ligase (336 aa).

The protein belongs to the AIR synthase family.

It is found in the cytoplasm. It catalyses the reaction 2-formamido-N(1)-(5-O-phospho-beta-D-ribosyl)acetamidine + ATP = 5-amino-1-(5-phospho-beta-D-ribosyl)imidazole + ADP + phosphate + H(+). The protein operates within purine metabolism; IMP biosynthesis via de novo pathway; 5-amino-1-(5-phospho-D-ribosyl)imidazole from N(2)-formyl-N(1)-(5-phospho-D-ribosyl)glycinamide: step 2/2. This is Phosphoribosylformylglycinamidine cyclo-ligase from Thermoanaerobacter sp. (strain X514).